Here is a 252-residue protein sequence, read N- to C-terminus: Small ribosomal subunit protein eS4 (252 aa).

The S4 RNA-binding domain occupies 43–106 (LPLLILVRDM…NKYYRVIPVP (64 aa)).

Belongs to the eukaryotic ribosomal protein eS4 family.

In Desulfurococcus amylolyticus (strain DSM 18924 / JCM 16383 / VKM B-2413 / 1221n) (Desulfurococcus kamchatkensis), this protein is Small ribosomal subunit protein eS4.